Here is a 450-residue protein sequence, read N- to C-terminus: Phosphoglucosamine mutase (450 aa).

The Phosphoserine intermediate role is filled by S101. 4 residues coordinate Mg(2+): S101, D240, D242, and D244. A Phosphoserine modification is found at S101.

The protein belongs to the phosphohexose mutase family. The cofactor is Mg(2+). Activated by phosphorylation.

The enzyme catalyses alpha-D-glucosamine 1-phosphate = D-glucosamine 6-phosphate. Catalyzes the conversion of glucosamine-6-phosphate to glucosamine-1-phosphate. The protein is Phosphoglucosamine mutase of Streptococcus equi subsp. zooepidemicus (strain MGCS10565).